The sequence spans 84 residues: Small ribosomal subunit protein uS17 (84 aa).

This sequence belongs to the universal ribosomal protein uS17 family. In terms of assembly, part of the 30S ribosomal subunit.

One of the primary rRNA binding proteins, it binds specifically to the 5'-end of 16S ribosomal RNA. The sequence is that of Small ribosomal subunit protein uS17 from Treponema pallidum (strain Nichols).